Consider the following 2035-residue polypeptide: Envoplakin (2035 aa).

Low complexity predominate over residues 1-27 (MFKGLSKGSQGKGSPKGSPAKGSPKGS). Disordered stretches follow at residues 1 to 37 (MFKG…AATQ) and 63 to 84 (KLQQ…QETG). Residues 1-841 (MFKGLSKGSQ…LEPALAVSAP (841 aa)) form a globular 1 region. Residues 12 to 28 (KGSPKGSPAKGSPKGSP) are 4 X 4 AA tandem repeats of K-G-S-P. Positions 71–84 (GEQNQALQHQQETG) are enriched in polar residues. A Spectrin repeat occupies 229 to 330 (YTHLQGCTKQ…LCICQESQLQ (102 aa)). A disordered region spans residues 400–419 (QEVAPLPQRRNPSKQPLHVD). Positions 413 to 470 (KQPLHVDSICDWDSGEVQLLRGERYTLKDNADPYTWLVQGPGGETKSAPAACLCIPAP) constitute an SH3 domain. Residues 842–1664 (KRLRVISLQE…EKERTLRDLH (823 aa)) are a coiled coil. The interval 842–1674 (KRLRVISLQE…TKVSREELNQ (833 aa)) is central fibrous rod domain. The Plectin 1 repeat unit spans residues 1186 to 1227 (KQKPKVQLQERVSEIFQVLPETEQEIRRLRAQLQETGSKKSG). Ser1576 is modified (phosphoserine). Basic and acidic residues predominate over residues 1607–1631 (KQQKARQLQEEGRLLSQKTESERQK). A disordered region spans residues 1607–1637 (KQQKARQLQEEGRLLSQKTESERQKAAQRSQ). Residues 1675–2035 (ETQTRETNLS…SPTLPRSCVR (361 aa)) form a globular 2 region. The stretch at 1679–1714 (RETNLSTKICILEPETGNDMSPYEAYKRGVIDRGQY) is one Plectin 2 repeat. Position 1800 is a phosphoserine (Ser1800). Plectin repeat units lie at residues 1819-1856 (FGLT…PITG), 1857-1894 (QKLL…NTST), 1895-1932 (QRLL…QESV), 1933-1970 (LPHL…EDLG), and 1971-2008 (QLLQ…PLSG). Ser2026 is modified (phosphoserine).

It belongs to the plakin or cytolinker family. In terms of assembly, may form a homodimer or a heterodimer with PPL.

Its subcellular location is the cell junction. It is found in the desmosome. It localises to the cornified envelope. The protein localises to the cytoplasm. The protein resides in the cytoskeleton. Its function is as follows. Component of the cornified envelope of keratinocytes. May link the cornified envelope to desmosomes and intermediate filaments. The sequence is that of Envoplakin (Evpl) from Mus musculus (Mouse).